The following is a 766-amino-acid chain: 5-methyltetrahydropteroyltriglutamate--homocysteine methyltransferase (766 aa).

Residues 16–19 and lysine 122 each bind 5-methyltetrahydropteroyltri-L-glutamate; that span reads RELK. Residues 443–445 and glutamate 496 each bind L-homocysteine; that span reads IGS. Residues 443–445 and glutamate 496 contribute to the L-methionine site; that span reads IGS. 5-methyltetrahydropteroyltri-L-glutamate contacts are provided by residues 527-528 and tryptophan 573; that span reads RC. Residue aspartate 611 participates in L-homocysteine binding. L-methionine is bound at residue aspartate 611. Residue glutamate 617 coordinates 5-methyltetrahydropteroyltri-L-glutamate. Zn(2+) is bound by residues histidine 653, cysteine 655, and glutamate 677. The active-site Proton donor is the histidine 706. Cysteine 738 lines the Zn(2+) pocket.

Belongs to the vitamin-B12 independent methionine synthase family. It depends on Zn(2+) as a cofactor.

It carries out the reaction 5-methyltetrahydropteroyltri-L-glutamate + L-homocysteine = tetrahydropteroyltri-L-glutamate + L-methionine. It participates in amino-acid biosynthesis; L-methionine biosynthesis via de novo pathway; L-methionine from L-homocysteine (MetE route): step 1/1. Its function is as follows. Catalyzes the transfer of a methyl group from 5-methyltetrahydrofolate to homocysteine resulting in methionine formation. The chain is 5-methyltetrahydropteroyltriglutamate--homocysteine methyltransferase from Pseudomonas putida (strain W619).